We begin with the raw amino-acid sequence, 710 residues long: Bifunctional sesterterpene synthase (710 aa).

The tract at residues 1-327 (MEFKFSAVVD…RYYTDASFSE (327 aa)) is stellata-2,6,19-trien synthase. Mg(2+)-binding residues include aspartate 92 and aspartate 96. Substrate-binding positions include aspartate 92, aspartate 96, 181–184 (RVHD), and 229–233 (SWDKE). The short motif at 92 to 96 (DDVTD) is the DDXXD motif 1 element. An NSE motif motif is present at residues 278 to 286 (YLRVFEEVK). Residue 318–319 (RY) participates in substrate binding. Residues 328–709 (RQLEWMKNGI…LRLIFELLRN (382 aa)) are geranylgeranyl diphosphate synthase. The interval 365-404 (HHAVTSNGTGTGSHDTLNGDGTAHENNSRDASIPGRTTNG) is disordered. The span at 368 to 380 (VTSNGTGTGSHDT) shows a compositional bias: polar residues. Isopentenyl diphosphate-binding residues include lysine 430, arginine 433, and histidine 462. Mg(2+) is bound by residues aspartate 469 and aspartate 473. A DDXXD motif 2 motif is present at residues 469-473 (DDLED). Arginine 478 lines the dimethylallyl diphosphate pocket. Isopentenyl diphosphate is bound at residue arginine 479. Positions 556, 557, 592, 599, 609, and 619 each coordinate dimethylallyl diphosphate.

This sequence in the C-terminal section; belongs to the FPP/GGPP synthase family. The protein in the N-terminal section; belongs to the terpene synthase family. Hexamer.

It carries out the reaction 4 isopentenyl diphosphate + dimethylallyl diphosphate = (2E,6E,10E,14E)-geranylfarnesyl diphosphate + 4 diphosphate. The catalysed reaction is (2E,6E,10E,14E)-geranylfarnesyl diphosphate = variecoladiene + diphosphate. The protein operates within secondary metabolite biosynthesis; terpenoid biosynthesis. Multifunctional sesterterpene synthase; part of the gene cluster that mediates the biosynthesis of the sesterterpene variecolin. The first step in the pathway is performed by the variecoladiene synthase vrcA that possesses both prenyl transferase and terpene cyclase activity, converting isopentenyl diphosphate and dimethylallyl diphosphate into geranylfarnesyl pyrophosphate (GFPP) and then converting GFPP into the tetracyclic variecoladiene. The cytochrome P450 monooxygenase vrcB then catalyzes multiple oxidations at C-5 and C-20 positions to yield variecolin. This is Bifunctional sesterterpene synthase from Aspergillus aculeatus (strain ATCC 16872 / CBS 172.66 / WB 5094).